Reading from the N-terminus, the 95-residue chain is MTLLTLSDLLTLLRECAGEEESIDLGGDVEDVAFDALGYDSLALLNTVGRIERDYGVQLGDDAVEKATTPRALIEMTNASLTGASPSAGGAARDK.

A Carrier domain is found at 3-81 (LLTLSDLLTL…ALIEMTNASL (79 aa)). Position 41 is an O-(pantetheine 4'-phosphoryl)serine (Ser41).

In terms of processing, 4'-phosphopantetheine is transferred from CoA to a specific serine of the apo-ACP-like protein.

It functions in the pathway antibiotic biosynthesis; oxytetracycline biosynthesis. Its function is as follows. Acyl carrier protein. The protein is Oxytetracycline polyketide synthase acyl carrier protein of Streptomyces rimosus.